We begin with the raw amino-acid sequence, 236 residues long: Ubiquinone biosynthesis O-methyltransferase (236 aa).

S-adenosyl-L-methionine-binding residues include R39, G59, D80, and M124.

This sequence belongs to the methyltransferase superfamily. UbiG/COQ3 family.

The enzyme catalyses a 3-demethylubiquinol + S-adenosyl-L-methionine = a ubiquinol + S-adenosyl-L-homocysteine + H(+). The catalysed reaction is a 3-(all-trans-polyprenyl)benzene-1,2-diol + S-adenosyl-L-methionine = a 2-methoxy-6-(all-trans-polyprenyl)phenol + S-adenosyl-L-homocysteine + H(+). The protein operates within cofactor biosynthesis; ubiquinone biosynthesis. Functionally, O-methyltransferase that catalyzes the 2 O-methylation steps in the ubiquinone biosynthetic pathway. This Shewanella sp. (strain MR-4) protein is Ubiquinone biosynthesis O-methyltransferase.